The chain runs to 697 residues: Zinc finger and BTB domain-containing protein 24 (697 aa).

The region spanning 10 to 133 (GQLVVHSDAH…AYTDFQNNHS (124 aa)) is the BTB domain. Residues 131-142 (NHSSPKPTTLNT) show a composition bias toward polar residues. Disordered regions lie at residues 131–176 (NHSS…EEKS) and 209–254 (EQIA…SRYS). Positions 159–171 (KRKRGRPKKVNTL) form a DNA-binding region, a.T hook. A compositionally biased stretch (basic and acidic residues) spans 212-245 (AAKEKEESEPTCEPSREEEMPVEKDENYDPKTED). C2H2-type zinc fingers lie at residues 294–316 (ARCKDCGKVFKYNHFLAIHQRSH), 322–344 (FKCNECGKGFAQKHSLQVHTRMH), 350–372 (YTCTVCSKALTTKHSLLEHMSLH), 378–400 (FTCDQCGKYFSQNRQLKSHYRVH), 406–428 (PECKDCHRKFMDVSQLKKHLRTH), 434–456 (FTCEICGKSFTAKSSLQTHIRIH), 462–484 (YSCGICGKSFSDSSAKRRHCILH), and 490–512 (FSCPECNLQFARLDNLKAHLKIH). Positions 652–697 (QEQTEELHLATSTSDPAQHLQLTQEPGPPPPTHHVPQPTPLGQEQS) are disordered. The span at 677 to 690 (PGPPPPTHHVPQPT) shows a compositional bias: pro residues.

This sequence belongs to the krueppel C2H2-type zinc-finger protein family. As to quaternary structure, interacts with MN1. Widely expressed, with highest levels in naive B-cells.

The protein resides in the nucleus. Functionally, may be involved in BMP2-induced transcription. This Homo sapiens (Human) protein is Zinc finger and BTB domain-containing protein 24 (ZBTB24).